The following is a 470-amino-acid chain: Amino-acid permease RocC (470 aa).

12 helical membrane passes run 18 to 38 (FMIALGGVIGTGLFLGSGFTI), 44 to 64 (LGAIAAYIIGGFLMYLVMLCL), 90 to 110 (GFMIGWLYWFSWANTVGLELT), 119 to 139 (WLPSVPIWIWCLVFGIVIFLI), 159 to 179 (VAAIILFIVIGGAAVFGLIDF), 196 to 216 (GLFPNGVLAVMFTLVMVNFSF), 243 to 263 (VIWRTLFFFVLAMFVLVAILP), 281 to 301 (IGIPFSADIMNFVILTAILSV), 338 to 358 (ALLITLGISGCSLLTSVMAAE), 360 to 380 (VYLWCISISGMVTVVAWMSIC), 409 to 429 (LVPILGFCLYGCVLISLIFIP), and 433 to 453 (IGLYCGVPIIIFCYAYYHLSI).

This sequence belongs to the amino acid-polyamine-organocation (APC) superfamily.

Its subcellular location is the cell membrane. In terms of biological role, putative transport protein involved in arginine degradative pathway. Probably transports arginine or ornithine. This Bacillus subtilis (strain 168) protein is Amino-acid permease RocC (rocC).